The sequence spans 96 residues: Small ribosomal subunit protein bS18 (96 aa).

Belongs to the bacterial ribosomal protein bS18 family. In terms of assembly, part of the 30S ribosomal subunit. Forms a tight heterodimer with protein bS6.

In terms of biological role, binds as a heterodimer with protein bS6 to the central domain of the 16S rRNA, where it helps stabilize the platform of the 30S subunit. This chain is Small ribosomal subunit protein bS18, found in Gluconobacter oxydans (strain 621H) (Gluconobacter suboxydans).